A 599-amino-acid chain; its full sequence is MLSYLKQNLHSYFSSRVLIFTLATAAIIFACATFYVISLESKNFSTIIGFLLVDLAIFLILGVVLTQKFFTKNNNNDSSKLQNRIVIAFSLVAAIPTIIVSVFSVYFFNLSVQAWFDKKISTVLDQSVIVAESYIAEHKLQLKETALAVAEDLSDMYYDLIHNPALFTKTLNTEAEMRSLDEAIVLNKSTNTIVANSYLSFSLSFATIPAHLIKKADLGELVEVKSDPTKIRMLIKLKEYNDVYLLVGRLVDNKIIDHVDATNGAAAEYNSLKNEIDNIQIKFSIMFIFIALLLLFVAISFGVIFTAKIVKPIKKLVTATDNVKDGDLTVQVPENEVDKDEIGTLYVAFNRMIKQLSRQQRDLVIAQRAMAWSDVAKKVAHEIKNPLTPILLASERLLKKFSPEIKERVEFENYLKMIIRHTNDIKNIVSEFVLFARLPAPKFTKSELVYLVKHIVEARKLLNDHILYKFESNVEQFDFMCDATQINQVMINLLKNAEESIEGRESGKIEVTIDVKDDFISVIVTDNGKGFPPELIGKATESYVTTSSKGMGVGLAIVKRIVEEHCGILDIANREAEGAIIDIKFDLKELDLKAKRLEM.

The next 4 membrane-spanning stretches (helical) occupy residues 17 to 37, 44 to 64, 85 to 105, and 285 to 305; these read VLIF…FYVI, FSTI…LGVV, IVIA…VFSV, and IMFI…GVIF. The region spanning 307-361 is the HAMP domain; the sequence is AKIVKPIKKLVTATDNVKDGDLTVQVPENEVDKDEIGTLYVAFNRMIKQLSRQQR. The Histidine kinase domain occupies 378–589; it reads KVAHEIKNPL…IIDIKFDLKE (212 aa). Phosphohistidine; by autocatalysis is present on H381.

It is found in the cell membrane. It catalyses the reaction ATP + protein L-histidine = ADP + protein N-phospho-L-histidine.. In terms of biological role, member of the two-component regulatory system RC0948/RC0849. The protein is Putative sensor histidine kinase NtrY-like of Rickettsia conorii (strain ATCC VR-613 / Malish 7).